Consider the following 93-residue polypeptide: Integration host factor subunit beta (93 aa).

The protein belongs to the bacterial histone-like protein family. In terms of assembly, heterodimer of an alpha and a beta chain.

Its function is as follows. This protein is one of the two subunits of integration host factor, a specific DNA-binding protein that functions in genetic recombination as well as in transcriptional and translational control. This is Integration host factor subunit beta from Aliivibrio fischeri (strain ATCC 700601 / ES114) (Vibrio fischeri).